Reading from the N-terminus, the 200-residue chain is MSPIIDALVPMVVEQTSRGERSYDIYSRLLKERVIFLTGQVEDHMANLVVAQLLFLESENPDKDIFLYINSPGGSVTAGMSIYDTMQFIKPNVSTVCMGQACSMGAFLLAGGAPGKRYVLPNSRVMIHQPLGGFQGQASDIQIHAQEILTIKTKLNKLLAEHTGQPLEVIERDTDRDNFMSADQAVEYGLVDAVLTHRSA.

Ser103 serves as the catalytic Nucleophile. The active site involves His128.

The protein belongs to the peptidase S14 family. Fourteen ClpP subunits assemble into 2 heptameric rings which stack back to back to give a disk-like structure with a central cavity, resembling the structure of eukaryotic proteasomes.

The protein localises to the cytoplasm. It carries out the reaction Hydrolysis of proteins to small peptides in the presence of ATP and magnesium. alpha-casein is the usual test substrate. In the absence of ATP, only oligopeptides shorter than five residues are hydrolyzed (such as succinyl-Leu-Tyr-|-NHMec, and Leu-Tyr-Leu-|-Tyr-Trp, in which cleavage of the -Tyr-|-Leu- and -Tyr-|-Trp bonds also occurs).. Its function is as follows. Cleaves peptides in various proteins in a process that requires ATP hydrolysis. Has a chymotrypsin-like activity. Plays a major role in the degradation of misfolded proteins. The protein is ATP-dependent Clp protease proteolytic subunit of Vibrio vulnificus (strain CMCP6).